The primary structure comprises 245 residues: Mannose/glucose-specific lectin (245 aa).

A carbohydrate is bound by residues D87 and G107. N-linked (GlcNAc...) asparagine glycosylation occurs at N119. Mn(2+) is bound by residues E129 and D131. 2 residues coordinate Ca(2+): D131 and F133. 2 residues coordinate a carbohydrate: S138 and N139. Residues N139 and D142 each coordinate Ca(2+). The Mn(2+) site is built by D142 and H147. Residues G221, E222, and Q223 each coordinate a carbohydrate.

Belongs to the leguminous lectin family. In terms of assembly, homodimer.

Functionally, mannose/glucose-specific lectin that also binds derivatives N-acetyl-D-glucosamine and alpha-methyl-D-mannopyranoside with even higher affinity. Has hemagglutinating activity towards rabbit erythrocytes. Is toxic towards brine shrimp A.nauplii. In rats, induces dose-dependent paw edema. The protein is Mannose/glucose-specific lectin of Centrolobium tomentosum (Arariba).